Reading from the N-terminus, the 260-residue chain is MSDNKSVLVLKVGGALLQCEMGMSRLMTAAAQMIATGQKVLLVHGGGCLVDEQLTANGKETIKLDGLRVTPEDQIPIVVGALAGTSNKILQAAAAKAGLVSVGMSLGDGNTVHAKIKDERLGLVGEVSPNDATYLNFILDQGWLPICSSIAVSADGLMLNVNADQAATALAKLVNGNLVLLSDVSGVLDGKGQLIASLNKTEIETLVKQGVIEKGMKVKVEAALEVAQWMGKPVQVASWRDAEQLKKLVLGQSVGTQIQP.

Substrate contacts are provided by residues 46–47 (GG), Arg-68, and Asn-160.

It belongs to the acetylglutamate kinase family. ArgB subfamily.

The protein localises to the cytoplasm. It catalyses the reaction N-acetyl-L-glutamate + ATP = N-acetyl-L-glutamyl 5-phosphate + ADP. Its pathway is amino-acid biosynthesis; L-arginine biosynthesis; N(2)-acetyl-L-ornithine from L-glutamate: step 2/4. Its function is as follows. Catalyzes the ATP-dependent phosphorylation of N-acetyl-L-glutamate. The chain is Acetylglutamate kinase from Shewanella denitrificans (strain OS217 / ATCC BAA-1090 / DSM 15013).